We begin with the raw amino-acid sequence, 147 residues long: UPF0306 protein YPK_3704 (147 aa).

This sequence belongs to the UPF0306 family.

The chain is UPF0306 protein YPK_3704 from Yersinia pseudotuberculosis serotype O:3 (strain YPIII).